The primary structure comprises 440 residues: UPF0489 protein C5orf22 homolog (440 aa).

Residues 187–207 (VEGSSSGIQSSTSESSEDGLM) are disordered. Low complexity predominate over residues 188 to 200 (EGSSSGIQSSTSE).

This sequence belongs to the UPF0489 family.

The polypeptide is UPF0489 protein C5orf22 homolog (Xenopus tropicalis (Western clawed frog)).